Reading from the N-terminus, the 259-residue chain is DNA utilization protein HofM (259 aa).

Its function is as follows. Required for the use of extracellular DNA as a nutrient. This is DNA utilization protein HofM (hofM) from Escherichia coli (strain K12).